The primary structure comprises 319 residues: ATP-dependent 6-phosphofructokinase (319 aa).

Residue Gly11 coordinates ATP. 21-25 (RAVVR) is an ADP binding site. Residues 72–73 (RC) and 102–105 (GDGS) each bind ATP. Position 103 (Asp103) interacts with Mg(2+). 125 to 127 (TID) is a substrate binding site. Asp127 acts as the Proton acceptor in catalysis. Residue Arg154 participates in ADP binding. Residues Arg162 and 169-171 (MGR) contribute to the substrate site. Residues 185 to 187 (GAE), Arg211, and 213 to 215 (KKH) contribute to the ADP site. Residues Glu222, Arg243, and 249–252 (HVQR) each bind substrate.

This sequence belongs to the phosphofructokinase type A (PFKA) family. ATP-dependent PFK group I subfamily. Prokaryotic clade 'B1' sub-subfamily. As to quaternary structure, homotetramer. The cofactor is Mg(2+).

It is found in the cytoplasm. The catalysed reaction is beta-D-fructose 6-phosphate + ATP = beta-D-fructose 1,6-bisphosphate + ADP + H(+). It participates in carbohydrate degradation; glycolysis; D-glyceraldehyde 3-phosphate and glycerone phosphate from D-glucose: step 3/4. Allosterically activated by ADP and other diphosphonucleosides, and allosterically inhibited by phosphoenolpyruvate. Its function is as follows. Catalyzes the phosphorylation of D-fructose 6-phosphate to fructose 1,6-bisphosphate by ATP, the first committing step of glycolysis. The protein is ATP-dependent 6-phosphofructokinase of Bacillus anthracis (strain A0248).